The primary structure comprises 380 residues: Chaperone protein DnaJ (380 aa).

The J domain maps to 4 to 69 (DYYEILGVTR…QKRAAYDRFG (66 aa)). The CR-type zinc finger occupies 135-213 (GKTAQINIPS…CQGTRRVEKN (79 aa)). Zn(2+) contacts are provided by C148, C151, C165, C168, C187, C190, C201, and C204. CXXCXGXG motif repeat units follow at residues 148–155 (CDSCEGSG), 165–172 (CGTCHGAG), 187–194 (CHACNGRG), and 201–208 (CPKCQGTR).

Belongs to the DnaJ family. Homodimer. Requires Zn(2+) as cofactor.

It localises to the cytoplasm. In terms of biological role, participates actively in the response to hyperosmotic and heat shock by preventing the aggregation of stress-denatured proteins and by disaggregating proteins, also in an autonomous, DnaK-independent fashion. Unfolded proteins bind initially to DnaJ; upon interaction with the DnaJ-bound protein, DnaK hydrolyzes its bound ATP, resulting in the formation of a stable complex. GrpE releases ADP from DnaK; ATP binding to DnaK triggers the release of the substrate protein, thus completing the reaction cycle. Several rounds of ATP-dependent interactions between DnaJ, DnaK and GrpE are required for fully efficient folding. Also involved, together with DnaK and GrpE, in the DNA replication of plasmids through activation of initiation proteins. This is Chaperone protein DnaJ from Bartonella quintana (strain Toulouse) (Rochalimaea quintana).